Here is a 1034-residue protein sequence, read N- to C-terminus: MLKTGKKFHYTAPANGYPEWNNNPEIFQLNRSKAHALLMPYQTVEEALKNDRKSSVYYQSLNGSWYFHFAENADGRVKNFFAPEFSYEKWDSISVPSHWQLQGYDYPQYTNVTYPWVENEELEPPFAPTKYNPVGQYVRTFTPKSEWKDQPVYISFQGVESAFYVWINGEFVGYSEDSFTPAEFDITSYLQEGENTIAVEVYRWSDASWLEDQDFWRMSGIFRDVYLYSTPQVHIYDFSVRSSLDNNYEDGELSVSADILNYFEHDTQDLTFEVMLYDANAQEVLQAPLQTNLSVSDQRTVSLRTHIKSPAKWSAESPNLYTLVLSLKNAAGSIIETESCKVGFRTFEIKNGLMTINGKRIVLRGVNRHEFDSVKGRAGITREDMIHDILLMKQHNINAVRTSHYPNDSVWYELCNEYGLYVIDETNLETHGTWTYLQEGEQKAVPGSKPEWKENVLDRCRSMYERDKNHPSIIIWSLGNESFGGENFQHMYTFFKEKDSTRLVHYEGIFHHRDYDASDIESTMYVKPADVERYALMNPKKPYILCEYSHAMGNSCGNLYKYWELFDQYPILQGGFIWDWKDQALQATAEDGTSYLAYGGDFGDTPNDGNFCGNGLIFADGTASPKIAEVKKCYQPVKWTAVDPAKGKFAVQNKHLFTNLNAYDFVWTVEKNGELVEKHASLLNVAPDGTDELTLSYPLYEQENETDEFVLTLSLRLSKDTAWASAGYEVAYEQFVLPAKAAMPSVKAAHPALTVDQNEQTLTVTGTNFTAIFDKRKGQFISYNYERTELLASGFRPNFWRAVTDNDLGNKLHERCQTWRQASLEQHVKKVTVQPQVDFVIISVELALDNSLASCYVTYTLYNDGEMKIEQSLAPSETMPEIPEIGMLFTMNAAFDSLTWYGRGPHENYWDRKTGAKLALHKGSVKEQVTPYLRPQECGNKTDVRWATITNDQGRGFLIKGLPTVELNALPYSPFELEAYDHFYKLPASDSVTVRVNYKQMGVGGDDSWQAKTHPNYTLYANRSYTNTFTLKPL.

Residue E481 is the Proton donor of the active site. The active-site Nucleophile is E547.

This sequence belongs to the glycosyl hydrolase 2 family.

The catalysed reaction is Hydrolysis of terminal non-reducing beta-D-galactose residues in beta-D-galactosides.. The sequence is that of Beta-galactosidase (bgaM) from Priestia megaterium (strain DSM 319 / IMG 1521) (Bacillus megaterium).